We begin with the raw amino-acid sequence, 188 residues long: uncharacterized protein (188 aa).

Residues 1–23 (MVRPKLAFYILPLLLAFLGSALG) form the signal peptide. Residue Asn74 is glycosylated (N-linked (GlcNAc...) asparagine).

This is an uncharacterized protein from Mus musculus (Mouse).